Here is a 1921-residue protein sequence, read N- to C-terminus: Endoribonuclease Dicer (1921 aa).

The region spanning 51–227 (LLEAALDHNT…ELEEKIKKLE (177 aa)) is the Helicase ATP-binding domain. ATP is bound at residue 64 to 71 (LNTGSGKT). Positions 175–178 (DECH) match the DECH box motif. The interval 409 to 433 (YVSWSDSEDDDEDEEIEEKEKPETN) is disordered. The span at 414 to 425 (DSEDDDEDEEIE) shows a compositional bias: acidic residues. Residues 433 to 602 (NFPSPFTNIL…SVDTSETETE (170 aa)) form the Helicase C-terminal domain. The Dicer dsRNA-binding fold domain occupies 630–722 (AIGHINRYCA…MPVGKETVKY (93 aa)). Residues 727–746 (DLHDEEETSVPGRPGSTKRR) are disordered. A PAZ domain is found at 895–1042 (KFMEDIEKSE…LVPELCAIHP (148 aa)). The disordered stretch occupies residues 1270 to 1289 (NLSKDKVDSEKNTSSGYSSK). 2 consecutive RNase III domains span residues 1277–1404 (DSEK…EETT) and 1665–1823 (FENF…MDSG). Glu-1317, Asp-1396, Glu-1399, and Glu-1704 together coordinate Mg(2+). The disordered stretch occupies residues 1782 to 1801 (QGMDSELRRSEEDEEKEEDI). Mg(2+) is bound by residues Asp-1809 and Glu-1812. In terms of domain architecture, DRBM spans 1848–1913 (VPRSPVRELL…ARRALRSLKA (66 aa)).

This sequence belongs to the helicase family. Dicer subfamily. Component of the RISC loading complex (RLC), or micro-RNA (miRNA) loading complex (miRLC), which is composed of DICER1, AGO2 and TARBP2; DICER1 and TARBP2 are required to process precursor miRNAs (pre-miRNAs) to mature miRNAs and then load them onto AGO2. Note that the trimeric RLC/miRLC is also referred to as RISC. It depends on Mg(2+) as a cofactor. The cofactor is Mn(2+).

It localises to the cytoplasm. It catalyses the reaction Endonucleolytic cleavage to 5'-phosphomonoester.. Double-stranded RNA (dsRNA) endoribonuclease playing a central role in short dsRNA-mediated post-transcriptional gene silencing. Cleaves naturally occurring long dsRNAs and short hairpin pre-microRNAs (miRNA) into fragments of twenty-one to twenty-three nucleotides with 3' overhang of two nucleotides, producing respectively short interfering RNAs (siRNA) and mature microRNAs. SiRNAs and miRNAs serve as guide to direct the RNA-induced silencing complex (RISC) to complementary RNAs to degrade them or prevent their translation. Gene silencing mediated by siRNAs, also called RNA interference, controls the elimination of transcripts from mobile and repetitive DNA elements of the genome but also the degradation of exogenous RNA of viral origin for instance. The miRNA pathway on the other side is a mean to specifically regulate the expression of target genes. This is Endoribonuclease Dicer (DICER1) from Gallus gallus (Chicken).